Consider the following 352-residue polypeptide: ATP synthase subunit a 2 (352 aa).

Residues 1-26 (MRKKAISRILALVVPVLLSLNSQAFA) form the signal peptide. The next 7 membrane-spanning stretches (helical) occupy residues 112-132 (VVMI…AGAS), 172-192 (FLPY…LGLI), 195-215 (GATA…TFVI), 232-252 (HLTA…EILG), 264-284 (LFAN…ISFI), 289-309 (IVAV…ELFV), and 310-330 (AFLQ…LATA).

It belongs to the ATPase A chain family. F-type ATPases have 2 components, CF(1) - the catalytic core - and CF(0) - the membrane proton channel. CF(1) has five subunits: alpha(3), beta(3), gamma(1), delta(1), epsilon(1). CF(0) has four main subunits: a, b, b' and c.

Its subcellular location is the cell inner membrane. Functionally, key component of the proton channel; it plays a direct role in the translocation of protons across the membrane. The protein is ATP synthase subunit a 2 of Chlorobaculum tepidum (strain ATCC 49652 / DSM 12025 / NBRC 103806 / TLS) (Chlorobium tepidum).